Here is a 158-residue protein sequence, read N- to C-terminus: Regulator of sigma D (158 aa).

The protein belongs to the Rsd/AlgQ family. Interacts with RpoD.

It localises to the cytoplasm. In terms of biological role, binds RpoD and negatively regulates RpoD-mediated transcription activation by preventing the interaction between the primary sigma factor RpoD with the catalytic core of the RNA polymerase and with promoter DNA. May be involved in replacement of the RNA polymerase sigma subunit from RpoD to RpoS during the transition from exponential growth to the stationary phase. This is Regulator of sigma D from Escherichia coli O127:H6 (strain E2348/69 / EPEC).